The following is a 458-amino-acid chain: Flavonol 3-O-glucosyltransferase F3GT2 (458 aa).

Catalysis depends on His20, which acts as the Proton acceptor. Position 20 (His20) interacts with an anthocyanidin. Asp119 functions as the Charge relay in the catalytic mechanism. Residue Thr141 coordinates UDP-alpha-D-glucose. Position 150 (His150) interacts with an anthocyanidin. 7 residues coordinate UDP-alpha-D-glucose: Ala333, Gln335, His350, Trp353, Asn354, Ser355, and Glu358. Residue Gly373 coordinates an anthocyanidin. UDP-alpha-D-glucose contacts are provided by Asp374 and Gln375.

Belongs to the UDP-glycosyltransferase family. In terms of tissue distribution, expressed in ovaries.

It carries out the reaction a flavonol + UDP-alpha-D-glucose = a flavonol 3-O-beta-D-glucoside + UDP + H(+). The protein operates within flavonoid metabolism. Functionally, catalyzes the glucosylation of quercetin. Preferentially uses UDP-glucose as sugar donor, but is also able to use UDP-gal and UDP-xyl. Is probably not required for the accumulation of anthocyanin in red-fleshed kiwifruit varieties. The polypeptide is Flavonol 3-O-glucosyltransferase F3GT2 (Actinidia chinensis var. chinensis (Chinese soft-hair kiwi)).